A 1360-amino-acid polypeptide reads, in one-letter code: S-layer protein A (1360 aa).

The N-terminal stretch at 1–24 (MNKSAIRYLSLLLVFLMGGSFLAG) is a signal peptide.

The protein belongs to the Sulfolobales SlaA family. As to quaternary structure, the mushroom-shaped unit cells of the Sulfolobales' S-layers may consist of three SlaB subunits and six SlaA subunits.

It is found in the secreted. Its subcellular location is the cell wall. The protein localises to the S-layer. In terms of biological role, S-layer large protein. May form the highly ordered outer sheath. The protein is S-layer protein A of Metallosphaera sedula (strain ATCC 51363 / DSM 5348 / JCM 9185 / NBRC 15509 / TH2).